Reading from the N-terminus, the 237-residue chain is Endonuclease V (237 aa).

2 residues coordinate Mg(2+): Asp-46 and Asp-114.

It belongs to the endonuclease V family. Requires Mg(2+) as cofactor.

Its subcellular location is the cytoplasm. It catalyses the reaction Endonucleolytic cleavage at apurinic or apyrimidinic sites to products with a 5'-phosphate.. In terms of biological role, DNA repair enzyme involved in the repair of deaminated bases. Selectively cleaves double-stranded DNA at the second phosphodiester bond 3' to a deoxyinosine leaving behind the intact lesion on the nicked DNA. This chain is Endonuclease V, found in Xanthomonas axonopodis pv. citri (strain 306).